A 265-amino-acid polypeptide reads, in one-letter code: Cyclin-B2-5 (265 aa).

This sequence belongs to the cyclin family. Cyclin AB subfamily.

The protein is Cyclin-B2-5 (CYCB2-5) of Arabidopsis thaliana (Mouse-ear cress).